The sequence spans 1363 residues: Zinc finger protein 541 (1363 aa).

Disordered regions lie at residues 1-23 (MEPY…SFSE) and 106-137 (LGAL…SPQN). 3 C2H2-type zinc fingers span residues 140-162 (LDCS…YLTH), 168-190 (HVCK…MLTH), and 196-221 (FVCI…EVQH). Disordered stretches follow at residues 232 to 269 (EEEA…GSVL), 286 to 387 (KIPS…GWPE), 440 to 532 (VASR…PGGL), and 574 to 741 (QVAT…GYRL). Over residues 311–321 (SLGSSSCTPAS) the composition is skewed to polar residues. The span at 335-345 (EETHPPRKEAA) shows a compositional bias: basic and acidic residues. A compositionally biased stretch (low complexity) spans 453–465 (PSSTPTSVEPSPS). A compositionally biased stretch (pro residues) spans 597 to 608 (GPWPPQTLPPAP). Residues 659–670 (PPSLTGPGLLPS) are compositionally biased toward low complexity. The C2H2-type 4 zinc-finger motif lies at 838-860 (FVCKNCSQMFYTEKGLSSHMCFH). A disordered region spans residues 935-978 (QGQEKDGEERDSKESCQYRKRKKRPQPKALFAPPAPSALGEPGP). Over residues 937-951 (QEKDGEERDSKESCQ) the composition is skewed to basic and acidic residues. The ELM2 domain occupies 1063–1155 (PHINVGSRFQ…VALETLLLRG (93 aa)). The SANT domain occupies 1170–1221 (TGSDIWTPMEKRLFKKAFCAHKKDFYLIHKMIQTKSVAQCVEYYYIWKKMVK). A disordered region spans residues 1243–1298 (RTEDKVTCSPRERPTHRPTPELKIKTKSYRRESILHSSPSAAPKRTPEPPGSVESQ). Residues 1244 to 1276 (TEDKVTCSPRERPTHRPTPELKIKTKSYRRESI) are compositionally biased toward basic and acidic residues. Residues 1301-1323 (FPCRECERVFDKIKSRNAHMKRH) form a C2H2-type 5 zinc finger. The interval 1343 to 1363 (LKEEEEEEEEELGADMGPLQW) is disordered. Positions 1345–1355 (EEEEEEEEELG) are enriched in acidic residues.

As to quaternary structure, interacts with DNTTIP1. Identified in a complex with KCTD19, HDAC1 and HSPA2. Identified in a complex with HDAC1, HDAC2, DNTTIP1 and KCTD19. Identified in a complex with KCTD19 and HDAC1. Germ-cell-specific. Specifically present in testicular spermatogenic cells, but not in testicular and mature sperm. During spermatogenesis, it is present in spermatocytes and round spermatids only (at protein level).

Its subcellular location is the nucleus. Transcription regulator which is essential for male fertility and for the completion of meiotic prophase in spermatocytes. Regulates progression of the pachytene stage of meiotic prophase by activating the expression of genes involved in meiosis and post-meiosis during spermatogenesis. Maintains the repression of pre-pachytene transcriptional programs, including meiotic double-strand breaks (DSB) formation genes in pachytene spermatocytes and suppresses aberrant DSB formation after mid-pachytene, thus ensuring meiosis progression. The sequence is that of Zinc finger protein 541 (Znf541) from Mus musculus (Mouse).